We begin with the raw amino-acid sequence, 127 residues long: Ribonuclease P protein component 1 (127 aa).

Belongs to the eukaryotic/archaeal RNase P protein component 1 family. As to quaternary structure, consists of a catalytic RNA component and at least 4 protein subunits. Forms a subcomplex with Rnp4 which stimulates the catalytic RNA.

Its subcellular location is the cytoplasm. The enzyme catalyses Endonucleolytic cleavage of RNA, removing 5'-extranucleotides from tRNA precursor.. Functionally, part of ribonuclease P, a protein complex that generates mature tRNA molecules by cleaving their 5'-ends. The RNA is catalytic, but its KM for pre-tRNA is 170-fold decreased in the presence of the 4 known protein subunits (Rnp1-4). The protein subunits also decrease the amount of Mg(2+) needed for activity. The polypeptide is Ribonuclease P protein component 1 (Pyrococcus furiosus (strain ATCC 43587 / DSM 3638 / JCM 8422 / Vc1)).